The following is a 298-amino-acid chain: Enoyl-CoA hydratase ACTT6 (298 aa).

This sequence belongs to the enoyl-CoA hydratase/isomerase family.

Its pathway is mycotoxin biosynthesis. Enoyl-CoA hydratase; part of the gene clusters that mediate the biosynthesis of the host-selective toxins (HSTs) ACT-toxins responsible for brown spot of tangerine disease by the tangerine pathotype which affects tangerines and mandarins. ACT-toxins consist of three moieties, 9,10-epoxy-8-hydroxy-9-methyl-decatrienoic acid (EDA), valine and a polyketide. ACT-toxin I is toxic to both citrus and pear; toxin II the 5''-deoxy derivative of ACT-toxin I, is highly toxic to pear and slightly toxic to citrus. On cellular level, ACT-toxins affect plasma membrane of susceptible cells and cause a sudden increase in loss of K(+) after a few minutes of toxin treatment. The acyl-CoA ligase ACTT1, the hydrolase ACTT2, the enoyl-CoA hydratases ACTT3 and ACTT6, and the acyl-CoA synthetase ACTT5 are all involved in the biosynthesis of the AK-, AF- and ACT-toxin common 9,10-epoxy-8-hydroxy-9-methyl-decatrienoic acid (EDA) structural moiety. The exact role of each enzyme, and of additional enzymes identified within the AF-toxin clusters have still to be determined. On the other hand, ACTTS1 to ACTTS4 are specific to the tangerine pathotype. The function of ACTTS3 is to elongate the polyketide chain portion of ACT-toxin that is unique to this toxin. The enoyl-reductase ACTTS2 might complement the missing enoyl-reductase (ER) domain in ACTTS3 in the synthesis of the polyketide portion of ACT-toxin. The roles of the nonribosomal peptide synthetases-related proteins ACTTS1 and ACTTS4 have also still not been elucidated. This is Enoyl-CoA hydratase ACTT6 from Alternaria alternata (Alternaria rot fungus).